The chain runs to 108 residues: Protein SMALL AUXIN UP-REGULATED RNA 8 (108 aa).

Belongs to the ARG7 family. Expressed in seedlings, leaves and flowers.

It is found in the cell membrane. In terms of biological role, provide a mechanistic link between auxin and plasma membrane H(+)-ATPases (PM H(+)-ATPases, e.g. AHA1 and AHA2), and triggers PM H(+)-ATPases activity by promoting phosphorylation of their C-terminal autoinhibitory domain as a result of PP2C-D subfamily of type 2C phosphatases inhibition, thus leading to the acidification of the apoplast and the facilitation of solutes and water uptake to drive cell expansion. Triggers plant growth probably by promoting cell elongation. Regulates branch angles and bending. This Arabidopsis thaliana (Mouse-ear cress) protein is Protein SMALL AUXIN UP-REGULATED RNA 8.